A 99-amino-acid chain; its full sequence is Large ribosomal subunit protein bL27 (99 aa).

The propeptide occupies 1–9 (MLIMNLQLF).

The protein belongs to the bacterial ribosomal protein bL27 family. The N-terminus is cleaved by ribosomal processing cysteine protease Prp.

The protein is Large ribosomal subunit protein bL27 of Clostridium beijerinckii (strain ATCC 51743 / NCIMB 8052) (Clostridium acetobutylicum).